An 898-amino-acid polypeptide reads, in one-letter code: DNA gyrase subunit A (898 aa).

2 disordered regions span residues methionine 1 to serine 22 and glutamate 36 to glycine 56. Residues leucine 97–leucine 562 enclose the Topo IIA-type catalytic domain. Tyrosine 185 serves as the catalytic O-(5'-phospho-DNA)-tyrosine intermediate. Residues glutamine 589 to glycine 595 carry the GyrA-box motif.

This sequence belongs to the type II topoisomerase GyrA/ParC subunit family. Heterotetramer, composed of two GyrA and two GyrB chains. In the heterotetramer, GyrA contains the active site tyrosine that forms a transient covalent intermediate with DNA, while GyrB binds cofactors and catalyzes ATP hydrolysis.

The protein localises to the cytoplasm. The enzyme catalyses ATP-dependent breakage, passage and rejoining of double-stranded DNA.. In terms of biological role, a type II topoisomerase that negatively supercoils closed circular double-stranded (ds) DNA in an ATP-dependent manner to modulate DNA topology and maintain chromosomes in an underwound state. Negative supercoiling favors strand separation, and DNA replication, transcription, recombination and repair, all of which involve strand separation. Also able to catalyze the interconversion of other topological isomers of dsDNA rings, including catenanes and knotted rings. Type II topoisomerases break and join 2 DNA strands simultaneously in an ATP-dependent manner. This Metamycoplasma arthritidis (strain 158L3-1) (Mycoplasma arthritidis) protein is DNA gyrase subunit A.